Consider the following 425-residue polypeptide: Serine hydroxymethyltransferase (425 aa).

(6S)-5,6,7,8-tetrahydrofolate contacts are provided by residues Leu125 and 129–131 (GHL). Position 234 is an N6-(pyridoxal phosphate)lysine (Lys234).

Belongs to the SHMT family. Homodimer. Pyridoxal 5'-phosphate is required as a cofactor.

The protein localises to the cytoplasm. It catalyses the reaction (6R)-5,10-methylene-5,6,7,8-tetrahydrofolate + glycine + H2O = (6S)-5,6,7,8-tetrahydrofolate + L-serine. It functions in the pathway one-carbon metabolism; tetrahydrofolate interconversion. It participates in amino-acid biosynthesis; glycine biosynthesis; glycine from L-serine: step 1/1. Its function is as follows. Catalyzes the reversible interconversion of serine and glycine with tetrahydrofolate (THF) serving as the one-carbon carrier. This reaction serves as the major source of one-carbon groups required for the biosynthesis of purines, thymidylate, methionine, and other important biomolecules. Also exhibits THF-independent aldolase activity toward beta-hydroxyamino acids, producing glycine and aldehydes, via a retro-aldol mechanism. In Marinomonas sp. (strain MWYL1), this protein is Serine hydroxymethyltransferase.